A 309-amino-acid chain; its full sequence is Uricase (309 aa).

Ala-2 is modified (N-acetylalanine). Active-site charge relay system residues include Lys-16 and Thr-63. Urate is bound by residues Thr-63, Asp-64, Phe-165, Arg-182, Val-237, Gln-238, and Asn-264. The Charge relay system role is filled by His-266. The short motif at Ser-307–Leu-309 is the Microbody targeting signal element.

Belongs to the uricase family.

Its subcellular location is the peroxisome. It catalyses the reaction urate + O2 + H2O = 5-hydroxyisourate + H2O2. It participates in purine metabolism; urate degradation; (S)-allantoin from urate: step 1/3. Its function is as follows. Catalyzes the oxidation of uric acid to 5-hydroxyisourate, which is further processed to form (S)-allantoin. This Arabidopsis thaliana (Mouse-ear cress) protein is Uricase.